A 447-amino-acid polypeptide reads, in one-letter code: Large ribosomal subunit protein bL27m (447 aa).

Basic and acidic residues-rich tracts occupy residues 377–402 (QREA…KAEK) and 409–447 (KVEK…EKKD). Positions 377–447 (QREAKKAREG…KKDSKTEKKD (71 aa)) are disordered.

This sequence belongs to the bacterial ribosomal protein bL27 family. Component of the mitochondrial large ribosomal subunit (mt-LSU). Mature N.crassa 74S mitochondrial ribosomes consist of a small (37S) and a large (54S) subunit. The 37S small subunit contains a 16S ribosomal RNA (16S mt-rRNA) and 32 different proteins. The 54S large subunit contains a 23S rRNA (23S mt-rRNA) and 42 different proteins.

The protein resides in the mitochondrion. Functionally, component of the mitochondrial ribosome (mitoribosome), a dedicated translation machinery responsible for the synthesis of mitochondrial genome-encoded proteins, including at least some of the essential transmembrane subunits of the mitochondrial respiratory chain. The mitoribosomes are attached to the mitochondrial inner membrane and translation products are cotranslationally integrated into the membrane. The polypeptide is Large ribosomal subunit protein bL27m (mrp7) (Neurospora crassa (strain ATCC 24698 / 74-OR23-1A / CBS 708.71 / DSM 1257 / FGSC 987)).